We begin with the raw amino-acid sequence, 722 residues long: Polyribonucleotide nucleotidyltransferase (722 aa).

Mg(2+) contacts are provided by aspartate 487 and aspartate 493. One can recognise a KH domain in the interval 554 to 613 (PRMVSFKIHPDKIREVIGKGGATIQALTKETGCSIDIKDDGTVTIASTSAEGMAEAKARI). One can recognise an S1 motif domain in the interval 623 to 691 (GKIYEGPVVK…ERGRLRLSLK (69 aa)).

The protein belongs to the polyribonucleotide nucleotidyltransferase family. Mg(2+) is required as a cofactor.

The protein resides in the cytoplasm. It carries out the reaction RNA(n+1) + phosphate = RNA(n) + a ribonucleoside 5'-diphosphate. Its function is as follows. Involved in mRNA degradation. Catalyzes the phosphorolysis of single-stranded polyribonucleotides processively in the 3'- to 5'-direction. In Polynucleobacter asymbioticus (strain DSM 18221 / CIP 109841 / QLW-P1DMWA-1) (Polynucleobacter necessarius subsp. asymbioticus), this protein is Polyribonucleotide nucleotidyltransferase.